We begin with the raw amino-acid sequence, 218 residues long: Adenylate kinase (218 aa).

Residue Gly11–Thr16 coordinates ATP. Residues Ser31–Val60 form an NMP region. Residues Thr32, Arg37, Asn58–Val60, Gly86–Arg89, and Gln93 contribute to the AMP site. The segment at Ala127–Asp165 is LID. Arg128 provides a ligand contact to ATP. Zn(2+)-binding residues include Cys131 and Cys134. Thr137–Tyr138 provides a ligand contact to ATP. Residues Cys151 and Cys154 each coordinate Zn(2+). Positions 162 and 173 each coordinate AMP. Gln201 contributes to the ATP binding site.

Belongs to the adenylate kinase family. In terms of assembly, monomer.

It localises to the cytoplasm. The catalysed reaction is AMP + ATP = 2 ADP. The protein operates within purine metabolism; AMP biosynthesis via salvage pathway; AMP from ADP: step 1/1. Catalyzes the reversible transfer of the terminal phosphate group between ATP and AMP. Plays an important role in cellular energy homeostasis and in adenine nucleotide metabolism. The chain is Adenylate kinase from Lactobacillus acidophilus (strain ATCC 700396 / NCK56 / N2 / NCFM).